The sequence spans 154 residues: Crossover junction endodeoxyribonuclease RuvC (154 aa).

Catalysis depends on residues Asp-7, Glu-67, and Asp-139. Positions 7, 67, and 139 each coordinate Mg(2+).

The protein belongs to the RuvC family. In terms of assembly, homodimer which binds Holliday junction (HJ) DNA. The HJ becomes 2-fold symmetrical on binding to RuvC with unstacked arms; it has a different conformation from HJ DNA in complex with RuvA. In the full resolvosome a probable DNA-RuvA(4)-RuvB(12)-RuvC(2) complex forms which resolves the HJ. Mg(2+) is required as a cofactor.

Its subcellular location is the cytoplasm. It catalyses the reaction Endonucleolytic cleavage at a junction such as a reciprocal single-stranded crossover between two homologous DNA duplexes (Holliday junction).. Functionally, the RuvA-RuvB-RuvC complex processes Holliday junction (HJ) DNA during genetic recombination and DNA repair. Endonuclease that resolves HJ intermediates. Cleaves cruciform DNA by making single-stranded nicks across the HJ at symmetrical positions within the homologous arms, yielding a 5'-phosphate and a 3'-hydroxyl group; requires a central core of homology in the junction. The consensus cleavage sequence is 5'-(A/T)TT(C/G)-3'. Cleavage occurs on the 3'-side of the TT dinucleotide at the point of strand exchange. HJ branch migration catalyzed by RuvA-RuvB allows RuvC to scan DNA until it finds its consensus sequence, where it cleaves and resolves the cruciform DNA. This Synechococcus sp. (strain CC9902) protein is Crossover junction endodeoxyribonuclease RuvC.